The chain runs to 159 residues: SsrA-binding protein (159 aa).

The segment at 131–159 (KGKKLHDKRESEKERDWNRQKSRLLKDNG) is disordered. Positions 137-159 (DKRESEKERDWNRQKSRLLKDNG) are enriched in basic and acidic residues.

Belongs to the SmpB family.

The protein resides in the cytoplasm. Functionally, required for rescue of stalled ribosomes mediated by trans-translation. Binds to transfer-messenger RNA (tmRNA), required for stable association of tmRNA with ribosomes. tmRNA and SmpB together mimic tRNA shape, replacing the anticodon stem-loop with SmpB. tmRNA is encoded by the ssrA gene; the 2 termini fold to resemble tRNA(Ala) and it encodes a 'tag peptide', a short internal open reading frame. During trans-translation Ala-aminoacylated tmRNA acts like a tRNA, entering the A-site of stalled ribosomes, displacing the stalled mRNA. The ribosome then switches to translate the ORF on the tmRNA; the nascent peptide is terminated with the 'tag peptide' encoded by the tmRNA and targeted for degradation. The ribosome is freed to recommence translation, which seems to be the essential function of trans-translation. The sequence is that of SsrA-binding protein from Rhizobium etli (strain CIAT 652).